Consider the following 279-residue polypeptide: Fatty acid desaturase 4-like 2, chloroplastic (279 aa).

The transit peptide at 1–30 (MATSLQTKYTLNPITNNIPRSHRPSFLRVT) directs the protein to the chloroplast. The next 3 membrane-spanning stretches (helical) occupy residues 68-90 (LWVA…GAFG), 98-118 (SLAG…YHWA), and 178-198 (VVHG…LFHA).

The protein belongs to the fatty acid desaturase CarF family.

It localises to the plastid. The protein resides in the chloroplast membrane. The protein operates within lipid metabolism; fatty acid metabolism. In terms of biological role, fatty acid desaturase involved in the production of chloroplast-specific phosphatidylglycerol molecular species. Catalyzes the formation of a trans double bond introduced close to the carboxyl group of palmitic acid, which is specifically esterified to the sn-2 glyceryl carbon of phosphatidylglycerol. This is Fatty acid desaturase 4-like 2, chloroplastic (FAD4L2) from Arabidopsis thaliana (Mouse-ear cress).